Here is a 174-residue protein sequence, read N- to C-terminus: Large ribosomal subunit protein uL10 (174 aa).

It belongs to the universal ribosomal protein uL10 family. In terms of assembly, part of the ribosomal stalk of the 50S ribosomal subunit. The N-terminus interacts with L11 and the large rRNA to form the base of the stalk. The C-terminus forms an elongated spine to which L12 dimers bind in a sequential fashion forming a multimeric L10(L12)X complex.

In terms of biological role, forms part of the ribosomal stalk, playing a central role in the interaction of the ribosome with GTP-bound translation factors. The polypeptide is Large ribosomal subunit protein uL10 (Geotalea uraniireducens (strain Rf4) (Geobacter uraniireducens)).